Reading from the N-terminus, the 113-residue chain is MEYVYAALILNESDEEVNEENITAVLEAAGVDVEESRVKALVAALEDVDIEEAIETAAAAPAPAAGGSAGGEVEAADDDDEEDAEEEAADEGGDDDGDDDEEADGEGLGALFG.

Residues 56-66 (TAAAAPAPAAG) are compositionally biased toward low complexity. A disordered region spans residues 56-113 (TAAAAPAPAAGGSAGGEVEAADDDDEEDAEEEAADEGGDDDGDDDEEADGEGLGALFG). The span at 74–105 (EAADDDDEEDAEEEAADEGGDDDGDDDEEADG) shows a compositional bias: acidic residues.

It belongs to the eukaryotic ribosomal protein P1/P2 family. Part of the 50S ribosomal subunit. Homodimer, it forms part of the ribosomal stalk which helps the ribosome interact with GTP-bound translation factors. Forms a heptameric uL10/P0(P1)2(P1)2(P1)2 complex, where uL10/P0 forms an elongated spine to which the P1 dimers bind in a sequential fashion.

In terms of biological role, forms part of the ribosomal stalk, playing a central role in the interaction of the ribosome with GTP-bound translation factors. This Haloferax volcanii (strain ATCC 29605 / DSM 3757 / JCM 8879 / NBRC 14742 / NCIMB 2012 / VKM B-1768 / DS2) (Halobacterium volcanii) protein is Large ribosomal subunit protein P1.